A 236-amino-acid chain; its full sequence is 2,3,4,5-tetrahydropyridine-2,6-dicarboxylate N-acetyltransferase (236 aa).

Belongs to the transferase hexapeptide repeat family. DapH subfamily.

It catalyses the reaction (S)-2,3,4,5-tetrahydrodipicolinate + acetyl-CoA + H2O = L-2-acetamido-6-oxoheptanedioate + CoA. It participates in amino-acid biosynthesis; L-lysine biosynthesis via DAP pathway; LL-2,6-diaminopimelate from (S)-tetrahydrodipicolinate (acetylase route): step 1/3. In terms of biological role, catalyzes the transfer of an acetyl group from acetyl-CoA to tetrahydrodipicolinate. This is 2,3,4,5-tetrahydropyridine-2,6-dicarboxylate N-acetyltransferase from Clostridium botulinum (strain Eklund 17B / Type B).